The sequence spans 119 residues: Phytosulfokines 2 (119 aa).

The signal sequence occupies residues 1-34 (MSTTRGVSSSSAAAALALLLLFALCFFSFHSAAA). A propeptide spanning residues 35–109 (ARAVPRDEHQ…RRLLSDAHLD (75 aa)) is cleaved from the precursor. Residues Y110 and Y112 each carry the sulfotyrosine modification. A propeptide spanning residues 115 to 119 (HKNKP) is cleaved from the precursor.

The protein belongs to the phytosulfokine family. In terms of processing, sulfation is important for activity and for the binding to a putative membrane receptor. PSK-alpha is produced by endopeptidase digestion. PSK-beta is produced from PSK-alpha by exopeptidase digestion.

The protein localises to the secreted. In terms of biological role, promotes plant cell differentiation, organogenesis and somatic embryogenesis as well as cell proliferation. This chain is Phytosulfokines 2 (PSK2), found in Oryza sativa subsp. indica (Rice).